The chain runs to 229 residues: Prolactin (229 aa).

Positions M1 to S30 are cleaved as a signal peptide. Cysteines 34 and 41 form a disulfide. S56 carries the post-translational modification Phosphoserine. N61 carries an N-linked (GlcNAc...) asparagine; partial glycan. A phosphoserine mark is found at S64 and S120. Cystine bridges form between C88–C204 and C221–C229.

It belongs to the somatotropin/prolactin family. Interacts with PRLR.

Its subcellular location is the secreted. Its function is as follows. Prolactin acts primarily on the mammary gland by promoting lactation. This Equus caballus (Horse) protein is Prolactin (PRL).